The chain runs to 310 residues: tRNA pseudouridine synthase B (310 aa).

Asp-49 acts as the Nucleophile in catalysis.

It belongs to the pseudouridine synthase TruB family. Type 1 subfamily.

It catalyses the reaction uridine(55) in tRNA = pseudouridine(55) in tRNA. In terms of biological role, responsible for synthesis of pseudouridine from uracil-55 in the psi GC loop of transfer RNAs. The polypeptide is tRNA pseudouridine synthase B (Sinorhizobium medicae (strain WSM419) (Ensifer medicae)).